The following is an 886-amino-acid chain: Vam6/Vps39-like protein (886 aa).

Residues proline 15–isoleucine 294 enclose the CNH domain. One copy of the CHCR repeat lies at phenylalanine 573–serine 750.

The protein belongs to the VAM6/VPS39 family. Homooligomer. Interacts with TGFBR2 and, less efficiently, with TGFBR1; interaction with TGFBR2 is independent of the receptor kinase activity and of the presence of TGF-beta. Also interacts with ACVR2B, but not with BMPR2. Interacts with SMAD4, preferentially following TGF-beta treatment. Does not interact with SAMD2 or SMAD3. Component of the homotypic fusion and vacuole protein sorting (HOPS) complex; the core of which composed of the class C Vps proteins VPS11, VPS16, VPS18 and VPS33A, is associated with VPS39 and VPS41. Interacts with PLEKHM2; involved in VPS39 recruitment to ARL8B-containing lysosomes. Associates with adapter protein complex 3 (AP-3) and clathrin:AP-3 complexes. Interacts with STX17; this interaction is increased in the absence of TMEM39A. Interacts with RAB7, RAB2A and RAB2B. Interacts with RAB2A (GTP-bound); the interaction contributes to obtaining a functional HOPS complex that promotes autophagosome-lysosome membrane fusion driven by STX17-SNAP29-VAMP8. Interacts with RAB39A (GTP-bound) and RAB39B (GTP-bound); interaction with RAB39A contributes to obtaining a functional HOPS complex. As to quaternary structure, (Microbial infection) Interacts with SARS coronavirus-2/SARS-CoV-2 ORF3A protein; the interaction is direct and sequestrates VPS39, thereby preventing HOPS complex from interacting with the autophagosomal SNARE protein STX17. ORF3A enhances the interaction of VPS39 with VPS11 and VPS18, while its interaction with the VPS16:VPS33A module is attenuated. As to expression, widely expressed, with highest levels in heart, skeletal muscle, kidney, pancreas, brain, placenta and spleen.

The protein localises to the cytoplasm. Its subcellular location is the lysosome membrane. It is found in the late endosome membrane. Its function is as follows. Regulator of TGF-beta/activin signaling, inhibiting SMAD3- and activating SMAD2-dependent transcription. Acts by interfering with SMAD3/SMAD4 complex formation, this would lead to inhibition of SMAD3-dependent transcription and relieve SMAD3 inhibition of SMAD2-dependent promoters, thus increasing SMAD2-dependent transcription. Does not affect TGF-beta-induced SMAD2 or SMAD3 phosphorylation, nor SMAD2/SMAD4 complex formation. In terms of biological role, plays a role in vesicle-mediated protein trafficking to lysosomal compartments including the endocytic membrane transport and autophagic pathways. Acts as a component of the HOPS endosomal tethering complex. This complex is proposed to be involved in the Rab5-to-Rab7 endosome conversion probably implicating MON1A/B, and via binding SNAREs and SNARE complexes to mediate tethering and docking events during SNARE-mediated membrane fusion. The HOPS complex is proposed to be recruited to Rab7 on the late endosomal membrane and to regulate late endocytic, phagocytic and autophagic traffic towards lysosomes. Involved in homotypic vesicle fusions between late endosomes and in heterotypic fusions between late endosomes and lysosomes. Required for fusion of endosomes and autophagosomes with lysosomes. The protein is Vam6/Vps39-like protein of Homo sapiens (Human).